The chain runs to 560 residues: Developmental and secondary metabolism regulator veA (560 aa).

The 207-residue stretch at 35–241 (GRRLWYRMRV…AEQGCRVRIR (207 aa)) folds into the Velvet domain. Positions 49–54 (ERARAC) match the Nuclear localization signal motif. Disordered regions lie at residues 49–70 (ERAR…VDPP), 171–197 (KEDK…ATGG), and 250–560 (DGKG…RLRY). The span at 171 to 183 (KEDKDKDKERDVE) shows a compositional bias: basic and acidic residues. A compositionally biased stretch (pro residues) spans 336–355 (AAPPQPFAQPPSVPASPVYP). Over residues 395-405 (PRRESIHHDYR) the composition is skewed to basic and acidic residues. Pro residues predominate over residues 411-439 (QLPPLPPPPYYPPTPQQSHMPPPQPPQVL). Residues 444–453 (IDSNSKSNNR) show a composition bias toward polar residues. The tract at residues 455 to 496 (PMPSPTALANSAPRPLASLAPLAPLMQSTSSSAGKGPVHPAT) is PEST. Residues 461–479 (ALANSAPRPLASLAPLAPL) are compositionally biased toward low complexity. Basic and acidic residues-rich tracts occupy residues 508-535 (RAHD…RSED) and 546-560 (RRAD…RLRY).

Belongs to the velvet family. VeA subfamily. Component of the heterotrimeric velvet complex composed of laeA, veA and velB; VeA acting as a bridging protein between laeA and velB.

The protein resides in the nucleus. It is found in the cytoplasm. Functionally, component of the velvet transcription factor complex that controls sexual/asexual developmental ratio in response to light, promoting sexual development in the darkness while stimulating asexual sporulation under illumination. The velvet complex acts as a global regulator for secondary metabolite gene expression. Positively regulates chaetoglobosin A biosynthesis by controlling the expression of core genes of the chaetoglobosin A biosynthetic gene cluster and other relevant regulators in a light-dependent manner. VeA directly regulates transcription factors brlA, laeA, and the chaetoglobosin A cluster-specific transcription regulator cheR. Also directly regulates the expression of one of the chaetoglobosin A cluster cytochrome P450 monooxygenases (cheE or cheG), but only indirectly regulates the expression of the PKS-NRPS hybrid cheA. Moreover, VeA has a significant effect on the asexual spores production, irrespective of light or dark condition. This is Developmental and secondary metabolism regulator veA from Chaetomium globosum (strain ATCC 6205 / CBS 148.51 / DSM 1962 / NBRC 6347 / NRRL 1970) (Soil fungus).